A 144-amino-acid chain; its full sequence is Alpha-crystallin (144 aa).

The region spanning 33 to 143 (PTFDTRLMRL…TEKHIQIRST (111 aa)) is the sHSP domain.

It belongs to the small heat shock protein (HSP20) family.

It localises to the secreted. The protein localises to the cell wall. The protein resides in the cytoplasm. In terms of biological role, acts as a chaperone. This Mycobacterium bovis (strain ATCC BAA-935 / AF2122/97) protein is Alpha-crystallin (hspX).